Consider the following 364-residue polypeptide: MALALLEDWCRIMSVDEQKSLMVTGIPADYEEAEIQEVLQETLKSLGRYRLLGKIFRKQENANAVLLELLEDTDISAIPSEVQGKGGVWKVIFKTPNQDTEFLERLNLFLEKEGQTVSGMFRALGHEGVSSATVPCISPELLAHLLGQAMAHAPQPLLPMRYRKLRVFSGSAVPAPEEEPFEVWLEQATEIVKEWPVTEAEKKRWLAESLRGPALDLMHIVQADNPSISVEECLEAFKQVFGSLESRRAAQVRYLKTYQEEGEKVSAYVLRLETLLRRAVEKRAIPRRIADQVRLEQVMAGATLNQMLWCRLRELKDQGPPPSFLELMKVIREEEEEEASFENESIEEPEEGDGYGRWNHEGDD.

The residue at position 2 (A2) is an N-acetylalanine. Residues 335–353 (EEEEASFENESIEEPEEGD) show a composition bias toward acidic residues. Residues 335–364 (EEEEASFENESIEEPEEGDGYGRWNHEGDD) are disordered.

It belongs to the PNMA family.

It is found in the nucleus. The protein resides in the nucleolus. This is Paraneoplastic antigen Ma2 homolog (PNMA2) from Pongo abelii (Sumatran orangutan).